Consider the following 209-residue polypeptide: Cerebral peptide 1 (209 aa).

An N-terminal signal peptide occupies residues 1–20 (MLLAKISVVVLLLAIDGTSS). The segment covering 21–39 (SESTDNVVLSSSPDSQKAA) has biased composition (polar residues). Residues 21–43 (SESTDNVVLSSSPDSQKAATSRH) constitute a propeptide, connecting peptide 1. The segment at 21–56 (SESTDNVVLSSSPDSQKAATSRHKRAPGWGKRSSLN) is disordered. At Trp49 the chain carries Tryptophan amide. Residues 53 to 77 (SSLNDEDLFADSDSAQELLDSVAAL) constitute a propeptide, connecting peptide 2. A tryptophan amide mark is found at Trp83 and Trp105. The tract at residues 98–169 (EAKRAPGWGK…APGWGKRSGG (72 aa)) is disordered. A propeptide spans 109 to 122 (GQEIDVDEDGSEQE) (connecting peptide 4). Trp128, Trp135, Trp142, Trp149, Trp156, and Trp163 each carry tryptophan amide. Positions 167–191 (SGGDYCETLEKMVDAYIYKAVEVDS) are cleaved as a propeptide — connecting peptide 5. A disulfide bridge connects residues Cys172 and Cys197.

In terms of assembly, homodimer; disulfide-linked. In terms of tissue distribution, cerebral peptide 1 is expressed in the cerebral, pedal and buccal ganglia and B1 and B2 neurons. APGW-amide is expressed in buccal ganglia and several neurons.

Its subcellular location is the secreted. Functionally, may function as a peptide transmitter. In Aplysia californica (California sea hare), this protein is Cerebral peptide 1.